A 308-amino-acid chain; its full sequence is Putative S-adenosyl-L-methionine-dependent methyltransferase MAB_4585c (308 aa).

Residues Asp-131 and Asp-160–Leu-161 contribute to the S-adenosyl-L-methionine site.

It belongs to the UPF0677 family.

Exhibits S-adenosyl-L-methionine-dependent methyltransferase activity. In Mycobacteroides abscessus (strain ATCC 19977 / DSM 44196 / CCUG 20993 / CIP 104536 / JCM 13569 / NCTC 13031 / TMC 1543 / L948) (Mycobacterium abscessus), this protein is Putative S-adenosyl-L-methionine-dependent methyltransferase MAB_4585c.